The following is a 225-amino-acid chain: MTDNCREDDDNLGTSGDNALSAPTQLLVTPPAPHQTIVPPLNFCPVERYLYRSGQPSTVNFPFLLNLNLRTIIWLANEEPQDALLAFCDMHDIRLRFAAINPEGGEDDNPWDGLTEHSIVSALQTIVHRDNYPLLVCCGMGRHRTGTVIGCLRRIMGWNLASVSEEYRRFTGSRGGRILVELLIEAFDTKSVTIDKANAPEWLATAVSASEASYVPATTYSIHEM.

The segment covering 1-11 (MTDNCREDDDN) has biased composition (acidic residues). The segment at 1-24 (MTDNCREDDDNLGTSGDNALSAPT) is disordered. The segment covering 12–24 (LGTSGDNALSAPT) has biased composition (polar residues). In terms of domain architecture, Tyrosine-protein phosphatase spans 42–196 (NFCPVERYLY…FDTKSVTIDK (155 aa)). The Phosphocysteine intermediate role is filled by Cys138.

The protein belongs to the protein-tyrosine phosphatase family.

The protein localises to the cytoplasm. The catalysed reaction is O-phospho-L-tyrosyl-[protein] + H2O = L-tyrosyl-[protein] + phosphate. Its function is as follows. Putative tyrosine-protein phosphatase required for protection against superoxide stress. The polypeptide is Putative tyrosine-protein phosphatase OCA1 (OCA1) (Eremothecium gossypii (strain ATCC 10895 / CBS 109.51 / FGSC 9923 / NRRL Y-1056) (Yeast)).